Reading from the N-terminus, the 246-residue chain is MRGFIIALQFLTRLPMPAPLRTIVVDDAAFARSMRWFPAVGLVIGAAVAGAAWAGALVDHRLGALAALIVWVGVTGALHLDGLADLADASGAAHKDRERLLAVLADPHVGSFGVVAIVLQLLSKLVLLDMLVDARAFGALVLVPFAARIGPLVWTWWLMPLHQGLAARFRSAIGPIDLAGWAAALAAAAWFTPALLVTPLLVLWWGWHVRRALGGISGDGHGAGIELIETGLLLSVAITGLWIHTT.

6 consecutive transmembrane segments (helical) span residues 37–57 (FPAV…AGAL), 64–84 (ALAA…DGLA), 100–122 (LLAV…LQLL), 139–159 (ALVL…WWLM), 185–205 (LAAA…VLWW), and 223–243 (AGIE…GLWI).

Belongs to the CobS family. Requires Mg(2+) as cofactor.

It is found in the cell inner membrane. It catalyses the reaction alpha-ribazole + adenosylcob(III)inamide-GDP = adenosylcob(III)alamin + GMP + H(+). It carries out the reaction alpha-ribazole 5'-phosphate + adenosylcob(III)inamide-GDP = adenosylcob(III)alamin 5'-phosphate + GMP + H(+). Its pathway is cofactor biosynthesis; adenosylcobalamin biosynthesis; adenosylcobalamin from cob(II)yrinate a,c-diamide: step 7/7. Functionally, joins adenosylcobinamide-GDP and alpha-ribazole to generate adenosylcobalamin (Ado-cobalamin). Also synthesizes adenosylcobalamin 5'-phosphate from adenosylcobinamide-GDP and alpha-ribazole 5'-phosphate. This chain is Adenosylcobinamide-GDP ribazoletransferase, found in Novosphingobium aromaticivorans (strain ATCC 700278 / DSM 12444 / CCUG 56034 / CIP 105152 / NBRC 16084 / F199).